Reading from the N-terminus, the 192-residue chain is Adenylate kinase (192 aa).

10-18 (GVPGVGKTT) contacts ATP.

This sequence belongs to the archaeal adenylate kinase family.

It localises to the cytoplasm. It catalyses the reaction AMP + ATP = 2 ADP. The chain is Adenylate kinase from Methanoculleus marisnigri (strain ATCC 35101 / DSM 1498 / JR1).